A 178-amino-acid chain; its full sequence is Cytochrome b6-f complex iron-sulfur subunit (178 aa).

A helical membrane pass occupies residues 20 to 42; it reads LLTFGSVTGVALGALYPVVNYFI. One can recognise a Rieske domain in the interval 71–161; the sequence is THPAGDRSLV…VSVENDNVFV (91 aa). The [2Fe-2S] cluster site is built by Cys107, His109, Cys125, and His128. A disulfide bridge links Cys112 with Cys127.

It belongs to the Rieske iron-sulfur protein family. As to quaternary structure, the 4 large subunits of the cytochrome b6-f complex are cytochrome b6, subunit IV (17 kDa polypeptide, PetD), cytochrome f and the Rieske protein, while the 4 small subunits are PetG, PetL, PetM and PetN. The complex functions as a dimer. Requires [2Fe-2S] cluster as cofactor.

The protein localises to the cellular thylakoid membrane. It catalyses the reaction 2 oxidized [plastocyanin] + a plastoquinol + 2 H(+)(in) = 2 reduced [plastocyanin] + a plastoquinone + 4 H(+)(out). In terms of biological role, component of the cytochrome b6-f complex, which mediates electron transfer between photosystem II (PSII) and photosystem I (PSI), cyclic electron flow around PSI, and state transitions. The protein is Cytochrome b6-f complex iron-sulfur subunit of Synechococcus sp. (strain WH7803).